Here is a 131-residue protein sequence, read N- to C-terminus: Holo-[acyl-carrier-protein] synthase (131 aa).

2 residues coordinate Mg(2+): D8 and E59.

This sequence belongs to the P-Pant transferase superfamily. AcpS family. Mg(2+) serves as cofactor.

The protein localises to the cytoplasm. The catalysed reaction is apo-[ACP] + CoA = holo-[ACP] + adenosine 3',5'-bisphosphate + H(+). Transfers the 4'-phosphopantetheine moiety from coenzyme A to a Ser of acyl-carrier-protein. The sequence is that of Holo-[acyl-carrier-protein] synthase from Rickettsia rickettsii (strain Sheila Smith).